We begin with the raw amino-acid sequence, 117 residues long: Large ribosomal subunit protein bL20 (117 aa).

It belongs to the bacterial ribosomal protein bL20 family.

Its function is as follows. Binds directly to 23S ribosomal RNA and is necessary for the in vitro assembly process of the 50S ribosomal subunit. It is not involved in the protein synthesizing functions of that subunit. This chain is Large ribosomal subunit protein bL20, found in Roseiflexus castenholzii (strain DSM 13941 / HLO8).